The following is a 238-amino-acid chain: tRNA (guanine-N(1)-)-methyltransferase (238 aa).

S-adenosyl-L-methionine contacts are provided by residues Gly-110 and 129–134 (LGDFIL).

It belongs to the RNA methyltransferase TrmD family. Homodimer.

Its subcellular location is the cytoplasm. It carries out the reaction guanosine(37) in tRNA + S-adenosyl-L-methionine = N(1)-methylguanosine(37) in tRNA + S-adenosyl-L-homocysteine + H(+). Its function is as follows. Specifically methylates guanosine-37 in various tRNAs. The chain is tRNA (guanine-N(1)-)-methyltransferase from Clostridium botulinum (strain Alaska E43 / Type E3).